An 846-amino-acid chain; its full sequence is Selenocysteine insertion sequence-binding protein 2 (846 aa).

Composition is skewed to basic and acidic residues over residues 151 to 165 and 206 to 215; these read RRAWEEQKSSNRRAD and PEFEFSRLDF. Disordered regions lie at residues 151 to 246, 266 to 288, 321 to 440, 448 to 467, and 475 to 613; these read RRAW…SNMS, TDHTDGAVTNNAATSSPSCTREL, TTSS…VPVQ, AALEKQQHAPHAKPSSRPVV, and VLSK…DSAT. A Phosphoserine modification is found at Ser-220. 3 stretches are compositionally biased toward polar residues: residues 220 to 232, 272 to 288, and 321 to 342; these read SPKNSNLPETQKQ, AVTNNAATSSPSCTREL, and TTSSADAKNVSVTSEALSSDPS. The Nuclear localization signal motif lies at 370-380; that stretch reads KKNKKKKEKSK. Residues 417–428 show a composition bias toward polar residues; it reads KLQSKQQAQNDF. The segment covering 527–536 has biased composition (basic and acidic residues); sequence ILKERQERMQ. Positions 542–551 are enriched in polar residues; it reads SAVSPTVASD. The interval 666–687 is RNA-binding; sequence LVLGLREVLKHLKLRKLKCIII. The disordered stretch occupies residues 774–804; that stretch reads RQEQAGEPGPQTPPSPPMQDPIQSTDEGTLA. Over residues 783–792 the composition is skewed to pro residues; it reads PQTPPSPPMQ.

In terms of tissue distribution, ubiquitous.

The protein localises to the cytoplasm. The protein resides in the nucleus. In terms of biological role, mRNA-binding protein that binds to the SECIS (selenocysteine insertion sequence) element present in the 3'-UTR of mRNAs encoding selenoproteins and facilitates the incorporation of the rare amino acid selenocysteine. Insertion of selenocysteine at UGA codons is mediated by SECISBP2 and EEFSEC: SECISBP2 (1) specifically binds the SECIS sequence once the 80S ribosome encounters an in-frame UGA codon and (2) contacts the RPS27A/eS31 of the 40S ribosome before ribosome stalling. (3) GTP-bound EEFSEC then delivers selenocysteinyl-tRNA(Sec) to the 80S ribosome and adopts a preaccommodated state conformation. (4) After GTP hydrolysis, EEFSEC dissociates from the assembly, selenocysteinyl-tRNA(Sec) accommodates, and peptide bond synthesis and selenoprotein elongation occur. This chain is Selenocysteine insertion sequence-binding protein 2 (Secisbp2), found in Rattus norvegicus (Rat).